We begin with the raw amino-acid sequence, 129 residues long: Glycoprotein hormone alpha-2 (129 aa).

The first 23 residues, 1–23, serve as a signal peptide directing secretion; it reads MPMASPQTLVLYLLVLAVTEAWG. 4 disulfides stabilise this stretch: Cys-31–Cys-89, Cys-48–Cys-103, Cys-57–Cys-119, and Cys-61–Cys-121. N-linked (GlcNAc...) asparagine glycosylation is found at Asn-37 and Asn-81.

This sequence belongs to the glycoprotein hormones subunit alpha family. Heterodimer with GPHB5; this heterodimer interacts with thyroid-stimulating hormone receptor (TSHR), and hence stimulates cAMP production. In terms of processing, glycosylated. Found in a variety of tissues.

Its subcellular location is the secreted. In terms of biological role, functions as a heterodimeric glycoprotein hormone with GPHB5 able to bind and activate the thyroid-stimulating hormone receptor (TSHR), leading to increased cAMP production. Plays a central role in controlling thyroid cell metabolism. The protein is Glycoprotein hormone alpha-2 (GPHA2) of Homo sapiens (Human).